Here is a 771-residue protein sequence, read N- to C-terminus: Post-GPI attachment to proteins factor 6 (771 aa).

A signal peptide spans 1–34 (MGRAGTGTGGEAVAAVVAGPLLLLLLARPPPASA). Topologically, residues 35 to 545 (GYSGKSEVGL…STAQTVAQQR (511 aa)) are extracellular. An N-linked (GlcNAc...) asparagine glycan is attached at N144. A disordered region spans residues 322–343 (FNASSGLLSPSPDHQDLGRSGR). The segment covering 334-343 (DHQDLGRSGR) has biased composition (basic and acidic residues). Residues N407 and N431 are each glycosylated (N-linked (GlcNAc...) asparagine). An EGF-like domain is found at 497–533 (PCLNDCGPYGQCLLLRRHSYLYASCSCKAGWRGWSCT). 3 cysteine pairs are disulfide-bonded: C498–C508, C502–C521, and C523–C532. A helical membrane pass occupies residues 546–566 (AATLLLTLSNLMFLAPIAVSV). The Cytoplasmic segment spans residues 567–568 (RR). A helical membrane pass occupies residues 569 to 589 (FFLVEASVYAYTMFFSTFYHA). The Extracellular segment spans residues 590-605 (CDQPGEAVLCILSYDT). The helical transmembrane segment at 606 to 626 (LQYCDFLGSGAAIWVTILCMA) threads the bilayer. Residues 627 to 629 (RLK) are Cytoplasmic-facing. The helical transmembrane segment at 630-650 (TVLKYVLFLLGTLVIAMSLQL) threads the bilayer. Topologically, residues 651-653 (DRR) are extracellular. The helical transmembrane segment at 654-674 (GMWNMLGPCLFAFVIMASMWA) threads the bilayer. The Cytoplasmic portion of the chain corresponds to 675 to 690 (YRCGHRRQCYPTSWQR). A helical membrane pass occupies residues 691–711 (WAFYLLPGVSMASVGIAIYTS). Residues 712 to 717 (MMTSDN) are Extracellular-facing. The chain crosses the membrane as a helical span at residues 718–738 (YYYTHSIWHILLAGSAALLLP). The Cytoplasmic segment spans residues 739–771 (PPDQPAEPWACSQKFPCHYQICKNDREELYAVT).

The protein belongs to the TMEM8 family. Post-translationally, glycosylated. As to expression, expressed in pancreas, placenta, spleen, liver, kidney, bone marrow, peripheral blood leukocytes and tonsil.

The protein localises to the cell membrane. Its subcellular location is the lysosome membrane. The enzyme catalyses a 1,2-diacyl-sn-glycero-3-phosphocholine + H2O = a 1-acyl-sn-glycero-3-phosphocholine + a fatty acid + H(+). Functionally, involved in the lipid remodeling steps of GPI-anchor maturation. Lipid remodeling steps consist in the generation of 2 saturated fatty chains at the sn-2 position of GPI-anchor proteins (GPI-AP). Has phospholipase A2 activity that removes an acyl-chain at the sn-2 position of GPI-anchors during the remodeling of GPI. Required for the shedding of the GPI-AP CRIPTO, but not CFC1, at the cell surface. Shedding of CRIPTO modulates Nodal signaling by allowing soluble CRIPTO to act as a Nodal coreceptor on other cells. Also indirectly involved in the translocation of RAC1 from the cytosol to the plasma membrane by maintaining the steady state amount of CAV1-enriched plasma membrane subdomains, stabilizing RAC1 at the plasma membrane. In contrast to myomaker (TMEM8C), has no fusogenic activity. The chain is Post-GPI attachment to proteins factor 6 from Homo sapiens (Human).